We begin with the raw amino-acid sequence, 172 residues long: UPF0102 protein AM1_3954 (172 aa).

It belongs to the UPF0102 family.

The chain is UPF0102 protein AM1_3954 from Acaryochloris marina (strain MBIC 11017).